Reading from the N-terminus, the 272-residue chain is Transcription factor E2F6 (272 aa).

A binding to corepressors region spans residues 1-62; sequence MSQQRTARRQ…MRKALKVKRP (62 aa). The DNA-binding element occupies 50–129; it reads YVSMRKALKV…SKNHIRWIGS (80 aa). The DEF box signature appears at 95–129; sequence KLGVRKRRVYDITNVLDGIELVEKKSKNHIRWIGS. Positions 130–222 are dimerization; that stretch reads DLNNFGAAPQ…PAPREDSITV (93 aa). Positions 143-164 are leucine-zipper; it reads LQAELSDLSAMEDALDELIKDC. Residues 173–272 are transcription repression; it reads DDKENERLAY…CPEKEDEPPQ (100 aa). The interval 242 to 272 is disordered; the sequence is HSNGKTNDGIGASPSKSSHPQCPEKEDEPPQ.

Belongs to the E2F/DP family. Forms heterodimers with DP family members TFDP1 or TFDP2. Component of the DRTF1/E2F transcription factor complex. Part of the E2F6.com-1 complex in G0 phase composed of E2F6, MGA, MAX, TFDP1, CBX3, BAT8, EUHMTASE1, RING1, RNF2, MBLR, L3MBTL2 and YAF2. Component of some MLL1/MLL complex, at least composed of the core components KMT2A/MLL1, ASH2L, HCFC1/HCF1, WDR5 and RBBP5, as well as the facultative components BACC1, CHD8, E2F6, HSP70, INO80C, KANSL1, LAS1L, MAX, MCRS1, MGA, KAT8/MOF, PELP1, PHF20, PRP31, RING2, RUVB1/TIP49A, RUVB2/TIP49B, SENP3, TAF1, TAF4, TAF6, TAF7, TAF9 and TEX10.

It localises to the nucleus. Functionally, inhibitor of E2F-dependent transcription. Binds DNA cooperatively with DP proteins through the E2 recognition site, 5'-TTTC[CG]CGC-3'. Has a preference for the 5'-TTTCCCGC-3' E2F recognition site. E2F6 lacks the transcriptional activation and pocket protein binding domains. Appears to regulate a subset of E2F-dependent genes whose products are required for entry into the cell cycle but not for normal cell cycle progression. Represses expression of some meiosis-specific genes, including SLC25A31/ANT4. May silence expression via the recruitment of a chromatin remodeling complex containing histone H3-K9 methyltransferase activity. Overexpression delays the exit of cells from the S-phase. This Mus musculus (Mouse) protein is Transcription factor E2F6.